The sequence spans 186 residues: Elongation factor P (186 aa).

It belongs to the elongation factor P family.

It localises to the cytoplasm. The protein operates within protein biosynthesis; polypeptide chain elongation. Its function is as follows. Involved in peptide bond synthesis. Stimulates efficient translation and peptide-bond synthesis on native or reconstituted 70S ribosomes in vitro. Probably functions indirectly by altering the affinity of the ribosome for aminoacyl-tRNA, thus increasing their reactivity as acceptors for peptidyl transferase. The protein is Elongation factor P of Shewanella sp. (strain ANA-3).